The sequence spans 210 residues: Thiamine-phosphate synthase (210 aa).

Residues 34–38 (QLRHK) and asparagine 66 each bind 4-amino-2-methyl-5-(diphosphooxymethyl)pyrimidine. Mg(2+)-binding residues include aspartate 67 and aspartate 86. Serine 105 is a 4-amino-2-methyl-5-(diphosphooxymethyl)pyrimidine binding site. 2-[(2R,5Z)-2-carboxy-4-methylthiazol-5(2H)-ylidene]ethyl phosphate is bound at residue 131–133 (TSS). Residue lysine 134 participates in 4-amino-2-methyl-5-(diphosphooxymethyl)pyrimidine binding. Glycine 162 contributes to the 2-[(2R,5Z)-2-carboxy-4-methylthiazol-5(2H)-ylidene]ethyl phosphate binding site.

The protein belongs to the thiamine-phosphate synthase family. Requires Mg(2+) as cofactor.

It catalyses the reaction 2-[(2R,5Z)-2-carboxy-4-methylthiazol-5(2H)-ylidene]ethyl phosphate + 4-amino-2-methyl-5-(diphosphooxymethyl)pyrimidine + 2 H(+) = thiamine phosphate + CO2 + diphosphate. It carries out the reaction 2-(2-carboxy-4-methylthiazol-5-yl)ethyl phosphate + 4-amino-2-methyl-5-(diphosphooxymethyl)pyrimidine + 2 H(+) = thiamine phosphate + CO2 + diphosphate. The catalysed reaction is 4-methyl-5-(2-phosphooxyethyl)-thiazole + 4-amino-2-methyl-5-(diphosphooxymethyl)pyrimidine + H(+) = thiamine phosphate + diphosphate. Its pathway is cofactor biosynthesis; thiamine diphosphate biosynthesis; thiamine phosphate from 4-amino-2-methyl-5-diphosphomethylpyrimidine and 4-methyl-5-(2-phosphoethyl)-thiazole: step 1/1. Functionally, condenses 4-methyl-5-(beta-hydroxyethyl)thiazole monophosphate (THZ-P) and 2-methyl-4-amino-5-hydroxymethyl pyrimidine pyrophosphate (HMP-PP) to form thiamine monophosphate (TMP). The sequence is that of Thiamine-phosphate synthase from Chlorobium limicola (strain DSM 245 / NBRC 103803 / 6330).